The chain runs to 518 residues: Probable malate:quinone oxidoreductase (518 aa).

Residues 495–518 are disordered; that stretch reads GAIPATTDGQSTAGTEHTPTAATV. Over residues 501–518 the composition is skewed to polar residues; it reads TDGQSTAGTEHTPTAATV.

The protein belongs to the MQO family. FAD serves as cofactor.

The catalysed reaction is (S)-malate + a quinone = a quinol + oxaloacetate. The protein operates within carbohydrate metabolism; tricarboxylic acid cycle; oxaloacetate from (S)-malate (quinone route): step 1/1. This is Probable malate:quinone oxidoreductase from Mycolicibacterium gilvum (strain PYR-GCK) (Mycobacterium gilvum (strain PYR-GCK)).